A 140-amino-acid chain; its full sequence is uncharacterized protein (140 aa).

18–25 (GTNGSGKS) lines the ATP pocket.

This is an uncharacterized protein from Haemophilus influenzae (strain ATCC 51907 / DSM 11121 / KW20 / Rd).